The primary structure comprises 361 residues: Peptide chain release factor 1 (361 aa).

The residue at position 236 (Gln-236) is an N5-methylglutamine.

Belongs to the prokaryotic/mitochondrial release factor family. In terms of processing, methylated by PrmC. Methylation increases the termination efficiency of RF1.

The protein localises to the cytoplasm. Peptide chain release factor 1 directs the termination of translation in response to the peptide chain termination codons UAG and UAA. The protein is Peptide chain release factor 1 of Lactobacillus delbrueckii subsp. bulgaricus (strain ATCC 11842 / DSM 20081 / BCRC 10696 / JCM 1002 / NBRC 13953 / NCIMB 11778 / NCTC 12712 / WDCM 00102 / Lb 14).